A 157-amino-acid polypeptide reads, in one-letter code: Probable succinate transporter subunit YjjB (157 aa).

5 helical membrane passes run 8–28, 34–54, 55–75, 87–107, and 129–149; these read LALMQDMILSAIPAVGFAMVF, ALPWCALLGALGHGLRMLMMS, AGFNIEWSTFMASLLVGSIGI, VFTVAAVIPMFPGISAYTAMI, and FLKASSIVGALSIGLSVPGLW.

The protein belongs to the ThrE exporter (TC 2.A.79) family. In terms of assembly, the transporter is composed of YjjB and YjjP.

It localises to the cell inner membrane. In terms of biological role, involved in succinate export with YjjP. Both proteins are required for export. The protein is Probable succinate transporter subunit YjjB of Salmonella typhi.